Here is a 140-residue protein sequence, read N- to C-terminus: Putative pre-16S rRNA nuclease (140 aa).

The protein belongs to the YqgF nuclease family.

Its subcellular location is the cytoplasm. Its function is as follows. Could be a nuclease involved in processing of the 5'-end of pre-16S rRNA. The sequence is that of Putative pre-16S rRNA nuclease from Vibrio cholerae serotype O1 (strain ATCC 39541 / Classical Ogawa 395 / O395).